We begin with the raw amino-acid sequence, 270 residues long: uncharacterized protein (270 aa).

Residue H171 is the Proton donor of the active site. C261 functions as the Nucleophile in the catalytic mechanism.

The protein belongs to the DDAH family.

This is an uncharacterized protein from Aeropyrum pernix (strain ATCC 700893 / DSM 11879 / JCM 9820 / NBRC 100138 / K1).